The chain runs to 151 residues: Transcription factor ATOH7 (151 aa).

A bHLH domain is found at 39–91 (KRRLAANARERRRMQGLNTAFDRLRKVVPQWGQDKKLSKYETLQMALSYIMAL).

The protein resides in the nucleus. The protein localises to the perikaryon. It is found in the cell projection. Its subcellular location is the axon. Transcription factor that binds to DNA at the consensus sequence 5'-CAG[GC]TG-3'. Positively regulates the determination of retinal ganglion cell fate and formation of the optic nerve and retino-hypothalamic tract. Required for retinal circadian rhythm photoentrainment. Plays a role in brainstem auditory signaling and binaural processing. During retinal neurogenesis, activates its own transcription, as well as the transcription of CHRNB3 and BRN3. The chain is Transcription factor ATOH7 from Gallus gallus (Chicken).